A 153-amino-acid chain; its full sequence is 3-hydroxyacyl-[acyl-carrier-protein] dehydratase FabZ (153 aa).

H57 is a catalytic residue.

Belongs to the thioester dehydratase family. FabZ subfamily.

The protein localises to the cytoplasm. The catalysed reaction is a (3R)-hydroxyacyl-[ACP] = a (2E)-enoyl-[ACP] + H2O. Functionally, involved in unsaturated fatty acids biosynthesis. Catalyzes the dehydration of short chain beta-hydroxyacyl-ACPs and long chain saturated and unsaturated beta-hydroxyacyl-ACPs. The protein is 3-hydroxyacyl-[acyl-carrier-protein] dehydratase FabZ of Aeromonas salmonicida (strain A449).